The sequence spans 196 residues: Probable GTP-binding protein EngB (196 aa).

Residues 24–196 (ELSEVALSGR…IWNLIEPYIS (173 aa)) form the EngB-type G domain. Residues 32 to 39 (GRSNVGKS), 59 to 63 (GKTQT), 77 to 80 (DVPG), 144 to 147 (TKED), and 176 to 178 (YSS) contribute to the GTP site. 2 residues coordinate Mg(2+): S39 and T61.

The protein belongs to the TRAFAC class TrmE-Era-EngA-EngB-Septin-like GTPase superfamily. EngB GTPase family. The cofactor is Mg(2+).

Necessary for normal cell division and for the maintenance of normal septation. The chain is Probable GTP-binding protein EngB from Staphylococcus aureus (strain MRSA252).